Here is a 444-residue protein sequence, read N- to C-terminus: Nuclear distribution protein PAC1 (444 aa).

Positions 59-87 (TAIARLQRRIMSLEQNIRDLREASIEMNA) form a coiled coil. 7 WD repeats span residues 113–152 (TLES…LPLA), 156–199 (AHTR…KLLR), 204–251 (HEHV…CLKS), 254–293 (PHSD…SVGL), 307–347 (SLQD…RLPQ), 367–406 (GHDS…KKWN), and 408–444 (IHQG…IFMQ).

It belongs to the WD repeat LIS1/nudF family. As to quaternary structure, self-associates. Interacts with NDL1 and dynein.

Its subcellular location is the cytoplasm. It localises to the cytoskeleton. The protein localises to the spindle pole. In terms of biological role, positively regulates the activity of the minus-end directed microtubule motor protein dynein. Plays a central role in positioning the mitotic spindle at the bud neck during cell division. Targets cytoplasmic dynein to microtubule plus ends, thereby promoting dynein-mediated microtubule sliding along the bud cortex and consequently the movement of the mitotic spindle to the bud neck. This is Nuclear distribution protein PAC1 from Zygosaccharomyces rouxii (strain ATCC 2623 / CBS 732 / NBRC 1130 / NCYC 568 / NRRL Y-229).